The chain runs to 185 residues: dCTP deaminase (185 aa).

DCTP-binding positions include 108–113 (KSTYAR), 132–134 (TLE), Gln153, Tyr167, and Gln177. Residue Glu134 is the Proton donor/acceptor of the active site.

The protein belongs to the dCTP deaminase family. Homotrimer.

The enzyme catalyses dCTP + H2O + H(+) = dUTP + NH4(+). Its pathway is pyrimidine metabolism; dUMP biosynthesis; dUMP from dCTP (dUTP route): step 1/2. Catalyzes the deamination of dCTP to dUTP. In Pelagibacter ubique (strain HTCC1062), this protein is dCTP deaminase.